The chain runs to 95 residues: MRTLGLLLALLFLAAQTPAQLMGEEAEEATGRPEATEAQEAAAALMAARAADRHVTDPEQQRIITCSCRTFCFLGERISGRCYQSVFIYRLCCRG.

The first 19 residues, 1–19 (MRTLGLLLALLFLAAQTPA), serve as a signal peptide directing secretion. The propeptide occupies 20 to 61 (QLMGEEAEEATGRPEATEAQEAAAALMAARAADRHVTDPEQQ). 3 cysteine pairs are disulfide-bonded: cysteine 66/cysteine 93, cysteine 68/cysteine 82, and cysteine 72/cysteine 92.

Belongs to the alpha-defensin family. As to expression, highly expressed in spleen, and expressed at lower levels in intestin and lung.

Its subcellular location is the secreted. Functionally, has antimicrobial activity. This chain is Defensin-A3, found in Ornithorhynchus anatinus (Duckbill platypus).